The primary structure comprises 1228 residues: Multimerin-1 (1228 aa).

The signal sequence occupies residues 1–19 (MKGARLFVLLSSLWSGGIG). An N-linked (GlcNAc...) asparagine glycan is attached at Asn21. Residues 68 to 98 (TPEARTSEDSLLKSTLPPSETSAPAEGVRNQ) form a disordered region. A compositionally biased stretch (polar residues) spans 79 to 89 (LKSTLPPSETS). N-linked (GlcNAc...) asparagine glycosylation is found at Asn97, Asn114, and Asn120. Asn136 carries N-linked (GlcNAc...) (complex) asparagine glycosylation. The interval 157–200 (NTVGGTGGIGGVGGTGGVGNRAPRETYLSRGDSSSSQRTDYQKS) is disordered. A compositionally biased stretch (gly residues) spans 160-175 (GGTGGIGGVGGTGGVG). Positions 186 to 188 (RGD) match the Cell attachment site motif. Positions 187 to 200 (GDSSSSQRTDYQKS) are enriched in polar residues. The EMI domain occupies 207-282 (GKNWCAYVHT…PGYSGPKCQL (76 aa)). 3 disulfide bridges follow: Cys211-Cys272, Cys238-Cys245, and Cys271-Cys280. A glycan (O-linked (Fuc) threonine) is linked at Thr216. Thr265 is a glycosylation site (O-linked (Fuc) threonine). Coiled-coil stretches lie at residues 333-365 (MKLT…KVSE) and 400-430 (NDMQ…IQKV). A glycan (N-linked (GlcNAc...) asparagine) is linked at Asn344. N-linked (GlcNAc...) asparagine glycosylation is found at Asn431, Asn507, Asn541, Asn576, Asn618, Asn680, Asn729, Asn783, Asn816, Asn828, Asn840, Asn921, Asn933, Asn942, Asn981, and Asn1020. Positions 503–523 (YESLNKTLSKLKEVHEQLLST) form a coiled coil. 2 coiled-coil regions span residues 580–650 (SLEM…EILQ) and 675–726 (RKKI…EMED). Residues 819-869 (NFQKMYQMFNETTSQVRKYQQNMSHLEEKLLLTTKISKNFETRLQDIESKV) adopt a coiled-coil conformation. Residues 1041-1077 (EYSSCSRHPCQNGGTCINGRTSFTCACRHPFTGDNCT) form the EGF-like domain. Cystine bridges form between Cys1045/Cys1056, Cys1050/Cys1065, and Cys1067/Cys1076. Thr1055 carries an O-linked (Fuc) threonine glycan. Asn1075 carries an N-linked (GlcNAc...) asparagine glycan. The C1q domain occupies 1096 to 1228 (RYAPMVAFFA…TFSGYLLYRT (133 aa)).

Multimeric. Composed of varying sized, disulfide-linked multimers, the smallest of which is a homotrimer. Proteolysis of the promultimerin in the N-terminal region, leads to the mature p155 form that is stored in platelets. Interacts with factor V/Va. Post-translationally, the N-terminus is blocked. In terms of processing, extensively N-glycosylated. O-fucosylated within the EMI domain (at Thr-216 and Thr-265) by FUT10/POFUT3 and FUT11/POFUT4. O-fucosylation at Thr-216 and Thr-1055 are required for facilitating protein folding and secretion. Synthesized by endothelial cells and megakaryocytes. Stored in platelet alpha granules and endothelial cell Weibel-Palade bodies, following activation of these cells, it is released and attached to megakaryocytes, platelets, endothelium and subendothelium of blood vessels. Not found in plasma. Found in vascular tissues such as placenta, lung, and liver.

Its subcellular location is the secreted. Functionally, carrier protein for platelet (but not plasma) factor V/Va. Plays a role in the storage and stabilization of factor V in platelets. Upon release following platelet activation, may limit platelet and plasma factor Va-dependent thrombin generation. Ligand for integrin alpha-IIb/beta-3 and integrin alpha-V/beta-3 on activated platelets, and may function as an extracellular matrix or adhesive protein. This is Multimerin-1 (MMRN1) from Homo sapiens (Human).